The sequence spans 126 residues: Protein ApaG (126 aa).

In terms of domain architecture, ApaG spans 2–126; sequence SALDDSIRVE…FRLALPGLLH (125 aa).

The protein is Protein ApaG of Shewanella sp. (strain MR-7).